Here is a 127-residue protein sequence, read N- to C-terminus: Large ribosomal subunit protein eL32 (127 aa).

The span at 38–48 shows a compositional bias: basic and acidic residues; sequence WRRPKGIDSKM. Residues 38-66 form a disordered region; sequence WRRPKGIDSKMRLKKKGKPRSPSIGWSSP.

It belongs to the eukaryotic ribosomal protein eL32 family.

This Thermococcus gammatolerans (strain DSM 15229 / JCM 11827 / EJ3) protein is Large ribosomal subunit protein eL32.